Reading from the N-terminus, the 1507-residue chain is DE-cadherin (1507 aa).

The first 69 residues, 1-69 (MSTSVQRMSR…AISLLSPALA (69 aa)), serve as a signal peptide directing secretion. Residues 70 to 261 (LHSPPDKNFS…IYLKRPIDKR (192 aa)) constitute a propeptide that is removed on maturation. 7 Cadherin domains span residues 97–195 (VKEE…APAF), 204–301 (MSEN…PPSF), 311–412 (LKEN…IPYY), 420–522 (ILEN…KPHF), 532–633 (LLED…TILE), 631–733 (ILEE…APFL), and 741–835 (WQEN…NDNA). The Extracellular segment spans residues 262-1328 (PGQSYAIIVR…VAFSFGIDRN (1067 aa)). Residues N317, N466, and N552 are each glycosylated (N-linked (GlcNAc...) asparagine). Residues N766, N949, N983, N999, and N1073 are each glycosylated (N-linked (GlcNAc...) asparagine). Positions 1084 to 1123 (VQAQCVCEAPLMRRCLNGGSPRYGENDVCDCIDGFTGPHC) constitute an EGF-like domain. 2 cysteine pairs are disulfide-bonded: C1098–C1112 and C1114–C1123. One can recognise a Laminin G-like domain in the interval 1125–1313 (LVSVAFYGSG…SVFRNIDSGC (189 aa)). 3 N-linked (GlcNAc...) asparagine glycosylation sites follow: N1145, N1274, and N1290. C1287 and C1313 are oxidised to a cystine. A helical membrane pass occupies residues 1329 to 1349 (FIIAIIVCLALLLIILLAVVV). The Cytoplasmic segment spans residues 1350–1507 (QKKQKNGWHE…NVDDDQGWRI (158 aa)). Residues 1350–1507 (QKKQKNGWHE…NVDDDQGWRI (158 aa)) form an interaction with Inx2 region. The interval 1488–1507 (YGEEPSDTDSNVDDDQGWRI) is disordered. S1493 bears the Phosphoserine mark.

As to quaternary structure, interacts (via cytoplasmic region) with Inx2 (via cytoplasmic loop). Interacts with Hakai. Interacts with Myo31DF. Post-translationally, N-glycosylation is important for biosynthesis and function. As to expression, in early stage 9 and stage 10 oocytes, expressed in border cells, strongly expressed in polar cells and very weakly expressed in the nurse cells (at protein level). In the embryo, expressed in the leading edge cells of the dorsal epidermis (at protein level). Stage 10 embryos exhibit intense expression in epithelial cells. Stage 14 embryos show expression in the hindgut (at the apical poles of cell-cell boundaries), at the apical junctions of tracheal cells and in the dorsal longitudinal trunk. In stage 16 embryos the glial midline cells of the central nervous system show strong expression.

Its subcellular location is the cell membrane. The protein localises to the apical cell membrane. In terms of biological role, cadherins are calcium-dependent cell adhesion proteins. In connecting cells they preferentially interact with themselves in a homophilic manner; cadherins may thus contribute to the sorting of heterogeneous cell types. During oogenesis, integral component of the guidance mechanisms that regulate the directional persistent collective migration of the border cell (BC) cluster through the nurse cells to the oocyte. Functions downstream of the two chemoattractant receptors, Pvr and Egfr, to promote BC adhesion between the leader cells of the migrating cluster and the surrounding nurse cells. This adhesion increases Rac1 signaling in the leading cells, which in turn stabilizes DE-cadherin/DE-cadherin adhesions through the formation of forward-directed protrusions which attach/detach to the surrounding nurse cells in order to pull the cluster through the egg chamber to the oocyte. Within the BC cluster, also promotes adhesion between BCs, and between BCs and polar cells which enables the lead BC to communicate direction to the other cells in the cluster, providing polarity to each individual cell and ensuring collective behavior. May function in cell intercalation in the lateral epidermis during germband extension. Contributes to the determination of body left-right asymmetry by enhancing Myo31DF activity and inhibiting Myo61F activity. This chain is DE-cadherin, found in Drosophila melanogaster (Fruit fly).